The following is a 175-amino-acid chain: NADH-ubiquinone oxidoreductase chain 6 (175 aa).

The next 5 membrane-spanning stretches (helical) occupy residues 1-21, 25-45, 47-67, 88-108, and 149-169; these read MMTY…VGFS, SPIY…GIIM, FGGS…MLVV, TVMG…LYVL, and YGAW…LVIL.

Belongs to the complex I subunit 6 family. As to quaternary structure, core subunit of respiratory chain NADH dehydrogenase (Complex I) which is composed of 45 different subunits.

Its subcellular location is the mitochondrion inner membrane. The catalysed reaction is a ubiquinone + NADH + 5 H(+)(in) = a ubiquinol + NAD(+) + 4 H(+)(out). Its function is as follows. Core subunit of the mitochondrial membrane respiratory chain NADH dehydrogenase (Complex I) which catalyzes electron transfer from NADH through the respiratory chain, using ubiquinone as an electron acceptor. Essential for the catalytic activity and assembly of complex I. This Equus caballus (Horse) protein is NADH-ubiquinone oxidoreductase chain 6 (MT-ND6).